Here is a 1953-residue protein sequence, read N- to C-terminus: TATA-binding protein-associated factor mot1 (1953 aa).

The stretch at 36 to 74 (PDELYNLLGRVVPYLKSKNWDTRVAAAKAIGGIVENVPV) is one HEAT 1 repeat. Residues 79-141 (RTSPVKKEET…KLEEERLSTR (63 aa)) form a disordered region. Basic and acidic residues predominate over residues 98–108 (TEEKPFIKTEE). Residues 113–130 (SSQSQVVVSSNLTSNSEV) show a composition bias toward low complexity. The segment covering 131–141 (SKLEEERLSTR) has biased composition (basic and acidic residues). S144 carries the post-translational modification Phosphoserine. The segment at 240–278 (DNVGSNSKGSPTTSIPEHKTSINNNKPEDTPTPSENVHL) is disordered. Residues 242-276 (VGSNSKGSPTTSIPEHKTSINNNKPEDTPTPSENV) are compositionally biased toward polar residues. HEAT repeat units follow at residues 358 to 396 (VWPF…YAGF), 513 to 551 (SDYL…KLVQ), 554 to 592 (LSSC…LCSF), and 608 to 646 (EFSF…VQTS). 2 disordered regions span residues 730 to 762 (SGQP…KDDP) and 1078 to 1103 (DDND…KSSL). 2 HEAT repeats span residues 1191 to 1229 (QSEI…SNAA) and 1270 to 1311 (VRIL…LVPL). Residues 1370–1543 (AFLNKYELHG…WSLFDFLMPG (174 aa)) enclose the Helicase ATP-binding domain. 1383–1390 (DDMGLGKT) is a binding site for ATP. Residues 1494-1497 (DEGH) carry the DEGH box motif. The HEAT 8 repeat unit spans residues 1580-1623 (EAIHKQVLPFMLRRLKEDVLADLPPKIIQDYYCDMSDLQRKLLN). The 153-residue stretch at 1725–1877 (GIDSALTNAV…STVVNQQNAG (153 aa)) folds into the Helicase C-terminal domain. The segment at 1901–1920 (QNIDKEESEDAAGRGLSGTS) is disordered.

It belongs to the SNF2/RAD54 helicase family. As to quaternary structure, forms a complex with TBP which binds TATA DNA.

Its subcellular location is the nucleus. Functionally, regulates transcription in association with TATA binding protein (TBP). Removes TBP from the TATA box via its ATPase activity. The protein is TATA-binding protein-associated factor mot1 of Schizosaccharomyces pombe (strain 972 / ATCC 24843) (Fission yeast).